We begin with the raw amino-acid sequence, 361 residues long: Protein RecA (361 aa).

77–84 contacts ATP; it reads GPESSGKT.

Belongs to the RecA family.

It is found in the cytoplasm. In terms of biological role, can catalyze the hydrolysis of ATP in the presence of single-stranded DNA, the ATP-dependent uptake of single-stranded DNA by duplex DNA, and the ATP-dependent hybridization of homologous single-stranded DNAs. It interacts with LexA causing its activation and leading to its autocatalytic cleavage. This chain is Protein RecA, found in Rhizobium etli.